Consider the following 154-residue polypeptide: 6,7-dimethyl-8-ribityllumazine synthase (154 aa).

5-amino-6-(D-ribitylamino)uracil is bound by residues F23, 57 to 59 (AYE), and 81 to 83 (AVI). Residue 86-87 (AT) coordinates (2S)-2-hydroxy-3-oxobutyl phosphate. The active-site Proton donor is H89. Residue F114 coordinates 5-amino-6-(D-ribitylamino)uracil. R128 provides a ligand contact to (2S)-2-hydroxy-3-oxobutyl phosphate.

The protein belongs to the DMRL synthase family.

It catalyses the reaction (2S)-2-hydroxy-3-oxobutyl phosphate + 5-amino-6-(D-ribitylamino)uracil = 6,7-dimethyl-8-(1-D-ribityl)lumazine + phosphate + 2 H2O + H(+). Its pathway is cofactor biosynthesis; riboflavin biosynthesis; riboflavin from 2-hydroxy-3-oxobutyl phosphate and 5-amino-6-(D-ribitylamino)uracil: step 1/2. Functionally, catalyzes the formation of 6,7-dimethyl-8-ribityllumazine by condensation of 5-amino-6-(D-ribitylamino)uracil with 3,4-dihydroxy-2-butanone 4-phosphate. This is the penultimate step in the biosynthesis of riboflavin. The sequence is that of 6,7-dimethyl-8-ribityllumazine synthase from Desulforamulus reducens (strain ATCC BAA-1160 / DSM 100696 / MI-1) (Desulfotomaculum reducens).